Here is a 474-residue protein sequence, read N- to C-terminus: MEARPPKGPGKQFTFDYENEVHKRDYFIKSPPPQLFFSGTSWKKRLFILSQSRGTGLSLSYYKDHQHRGSIEIDGSSTVEVGINCQEKMQSVQKMFKCHPDEVMSIRTANRDYFLIGHDREKIKDWVSFMTPYCQGVKATHQRAEEKLSLGDRRPVSDPSPFLGLCSIPEGIRLASPRASLPEHLIQKSLQRFRQAHLHQDHDFHSEPTQDTEEEYYLTPRSLEACLELENIAGPNDSGDSIESNSPDQGFKRAESNYVSMRSLRTCLLKESTSASADDNDGQAEFQTESELGPPHQDSGTGSDPCLSPPNSKAQTTDDQKGSASLTVVKLSILLNNIPDESQVETLNVFLSPRDAIDYLALVEAAGQICVARWEGPPRLGCLFYHGDHILAVNDLKPQSLEEVSLFLTRCIQKEKVKLSIGRIPNSEKLHASPCACSLRHQLAESVQRDLPELERTPKRSPAIKKSQKEAAGE.

The PH domain occupies glutamate 20–glutamine 135. 3 disordered regions span residues isoleucine 232–phenylalanine 251, serine 272–lysine 321, and arginine 449–glutamate 474. Polar residues predominate over residues serine 238–aspartate 248. Over residues arginine 449–proline 458 the composition is skewed to basic and acidic residues.

This chain is Pleckstrin homology domain-containing family S member 1, found in Mus musculus (Mouse).